Here is a 655-residue protein sequence, read N- to C-terminus: Probable glucan endo-1,3-beta-glucosidase btgC (655 aa).

Disordered regions lie at residues 1-61 (MSGD…ATPG) and 89-114 (SGVDAFRDTDGGNFPAERGYNAPGSD). At 1–282 (MSGDPRSFSF…PKPGTGSRKR (282 aa)) the chain is on the cytoplasmic side. Polar residues predominate over residues 19–33 (DSSQQPLHPTNTMAD). Over residues 89 to 98 (SGVDAFRDTD) the composition is skewed to basic and acidic residues. The chain crosses the membrane as a helical; Signal-anchor for type II membrane protein span at residues 283-303 (GWIVGIILAVVIVGAIVGGAV). Topologically, residues 304–655 (GGTLGNREKE…IPDCGGKTAT (352 aa)) are extracellular. A disordered region spans residues 305-338 (GTLGNREKESPSSSETASGDEKVNGDLGKDSDEI). The span at 323-338 (GDEKVNGDLGKDSDEI) shows a compositional bias: basic and acidic residues. Residue N426 is glycosylated (N-linked (GlcNAc...) asparagine). The active-site Proton donor is the E458. The active-site Nucleophile is the E557. N-linked (GlcNAc...) asparagine glycosylation is found at N576 and N602.

The protein belongs to the glycosyl hydrolase 17 family.

The protein localises to the cell membrane. It catalyses the reaction Hydrolysis of (1-&gt;3)-beta-D-glucosidic linkages in (1-&gt;3)-beta-D-glucans.. Its function is as follows. Glucanases play a role in cell expansion during growth, in cell-cell fusion during mating, and in spore release during sporulation. This enzyme may be involved in beta-glucan degradation. Active on laminarin and lichenan. The chain is Probable glucan endo-1,3-beta-glucosidase btgC (btgC) from Aspergillus terreus (strain NIH 2624 / FGSC A1156).